Reading from the N-terminus, the 431-residue chain is MRTERSIELFARAREYIPGGVNSPVRAFKAVGNNPLFIKEGHGSKIYDVDGNEYIDYVCSWGPLILGHSHPQVVQAICEAAEKGSSFGAPCEQEIELAQLICEAIPSVEKVRMVNSGTEATMSAVRLARAFTGRNHIVKFEGCYHGHADHFLIQAGSGLLTAGVPTSPGVPEAFARHTLVARYNDLDSVERLFAQAPADIAAVIVEPVAGNMGLVLPEPGFLEGLRQITKRYGALLIFDEVISGFRFCFGGYQNIVNIEPDLTTLGKIIGGGLPVGAYGGKKEIMERIAPEGDVYQAGTLSGNPLAMAAGSATLKILRAGKCYELLESTAASLCGQLNQILAQHDGLLSMNRVASLFSLFFTGDKVRDYSSVMRSDTGKYASFHQQLLQGGVYFPPSQFEVCFISAAHDEGDVEKTLKTIDKALQQTMVEQ.

The residue at position 267 (Lys267) is an N6-(pyridoxal phosphate)lysine.

Belongs to the class-III pyridoxal-phosphate-dependent aminotransferase family. HemL subfamily. Homodimer. It depends on pyridoxal 5'-phosphate as a cofactor.

It is found in the cytoplasm. It catalyses the reaction (S)-4-amino-5-oxopentanoate = 5-aminolevulinate. It functions in the pathway porphyrin-containing compound metabolism; protoporphyrin-IX biosynthesis; 5-aminolevulinate from L-glutamyl-tRNA(Glu): step 2/2. This Syntrophomonas wolfei subsp. wolfei (strain DSM 2245B / Goettingen) protein is Glutamate-1-semialdehyde 2,1-aminomutase.